The chain runs to 538 residues: Dolichol kinase (538 aa).

Topologically, residues 1 to 18 are lumenal; it reads MTRECAPPTPGSGAPLSG. A helical transmembrane segment spans residues 19–39; that stretch reads SVLAEAAVVFVVVLSIHAAVW. The Cytoplasmic portion of the chain corresponds to 40–74; sequence DRYSWCAVALAVQAFYVQYKWDRLLQQGSAVFQFR. A helical transmembrane segment spans residues 75–95; it reads MSANSGLLPASVVMPLLGLVM. The Lumenal segment spans residues 96–111; the sequence is KERCQAAGNPYFERFG. Residues 112–132 traverse the membrane as a helical segment; that stretch reads IVVAATGMAVALFSSVLALGI. At 133 to 134 the chain is on the cytoplasmic side; sequence TR. A helical membrane pass occupies residues 135–155; the sequence is PVPTNTCVISGLAGGVIIYIM. Topologically, residues 156 to 163 are lumenal; the sequence is KHSLSVGE. A helical transmembrane segment spans residues 164 to 184; it reads VIEVLEALLIFVYLNMILLYL. At 185-188 the chain is on the cytoplasmic side; sequence LPRC. A helical transmembrane segment spans residues 189–209; sequence FTPGEALLVLGGISFMLNQLI. Residues 210–224 are Lumenal-facing; sequence KRSLTVVESQGDPLD. A helical membrane pass occupies residues 225–245; that stretch reads FFLLVVVVGMVLMGIFFSTLF. The Cytoplasmic portion of the chain corresponds to 246-254; it reads VFMDSGTWA. The helical transmembrane segment at 255–275 threads the bilayer; it reads SSIFFHLMTCVLGLGVVLPWL. The Lumenal portion of the chain corresponds to 276–297; sequence HRLIRRNPLLWLFQFLFQTETR. A helical membrane pass occupies residues 298 to 318; that stretch reads VYLLAYWCLLATVACLVVLYQ. Residues 319–337 are Cytoplasmic-facing; the sequence is NAKRSSSESKKHQAPTITR. The chain crosses the membrane as a helical span at residues 338-354; the sequence is KYFHFIVVATYIPGIIL. Residues 355–359 lie on the Lumenal side of the membrane; sequence DRPLL. A helical membrane pass occupies residues 360–380; that stretch reads YVAATVCLAVFIFLEYVRYFR. Residues 381 to 401 are Cytoplasmic-facing; it reads IKPLGHTLRSLLSLFLDERDS. Residues 402–422 form a helical membrane-spanning segment; it reads GPLILTHIYLLLGMSLPIWLV. Residues 423-436 lie on the Lumenal side of the membrane; the sequence is PRPCTQKGSLGGAR. A helical transmembrane segment spans residues 437-457; sequence ALVPYAGVLAVGVGDTVASIF. Residues 458–472 lie on the Cytoplasmic side of the membrane; that stretch reads GSTMGEIRWPGTKKT. The tract at residues 459-474 is CTP-binding; it reads STMGEIRWPGTKKTFE. A helical membrane pass occupies residues 473–493; that stretch reads FEGTMTSIFAQIISVALILIF. The Lumenal segment spans residues 494-495; that stretch reads DS. A helical transmembrane segment spans residues 496–516; the sequence is GVDLNYSYAWILGSISTVSLL. Residues 517–538 are Cytoplasmic-facing; it reads EAYTTQIDNLLLPLYLLILLMA.

The protein belongs to the polyprenol kinase family.

The protein localises to the endoplasmic reticulum membrane. The catalysed reaction is a di-trans,poly-cis-dolichol + CTP = a di-trans,poly-cis-dolichyl phosphate + CDP + H(+). It participates in protein modification; protein glycosylation. In terms of biological role, catalyzes CTP-mediated phosphorylation of dolichol, the terminal step in de novo dolichyl monophosphate (Dol-P) biosynthesis. Dol-P is a lipid carrier essential for the synthesis of N-linked and O-linked oligosaccharides and for GPI anchors. The protein is Dolichol kinase (DOLK) of Bos taurus (Bovine).